The following is a 182-amino-acid chain: Adenine phosphoribosyltransferase (182 aa).

This sequence belongs to the purine/pyrimidine phosphoribosyltransferase family. In terms of assembly, homodimer.

The protein resides in the cytoplasm. It carries out the reaction AMP + diphosphate = 5-phospho-alpha-D-ribose 1-diphosphate + adenine. Its pathway is purine metabolism; AMP biosynthesis via salvage pathway; AMP from adenine: step 1/1. In terms of biological role, catalyzes a salvage reaction resulting in the formation of AMP, that is energically less costly than de novo synthesis. The polypeptide is Adenine phosphoribosyltransferase (Ectopseudomonas mendocina (strain ymp) (Pseudomonas mendocina)).